We begin with the raw amino-acid sequence, 451 residues long: uncharacterized protein (451 aa).

The region spanning 50-147 (RFEHSLGTMF…DVDADRMDYL (98 aa)) is the HD domain.

This is an uncharacterized protein from Methanocaldococcus jannaschii (strain ATCC 43067 / DSM 2661 / JAL-1 / JCM 10045 / NBRC 100440) (Methanococcus jannaschii).